A 61-amino-acid chain; its full sequence is Small ribosomal subunit protein uS14B (61 aa).

Zn(2+) is bound by residues cysteine 24, cysteine 27, cysteine 40, and cysteine 43.

This sequence belongs to the universal ribosomal protein uS14 family. Zinc-binding uS14 subfamily. As to quaternary structure, part of the 30S ribosomal subunit. Contacts proteins S3 and S10. The cofactor is Zn(2+).

Its function is as follows. Binds 16S rRNA, required for the assembly of 30S particles and may also be responsible for determining the conformation of the 16S rRNA at the A site. The polypeptide is Small ribosomal subunit protein uS14B (Myxococcus xanthus (strain DK1622)).